The sequence spans 592 residues: Aspartate--tRNA ligase (592 aa).

Glutamate 180 is an L-aspartate binding site. The aspartate stretch occupies residues 204 to 207 (QLFK). Arginine 226 is a binding site for L-aspartate. Residues 226–228 (RDE) and glutamine 235 contribute to the ATP site. Residue histidine 455 coordinates L-aspartate. Glutamate 489 contacts ATP. L-aspartate is bound at residue arginine 496. 541–544 (GFDR) provides a ligand contact to ATP.

This sequence belongs to the class-II aminoacyl-tRNA synthetase family. Type 1 subfamily. Homodimer.

The protein localises to the cytoplasm. The enzyme catalyses tRNA(Asp) + L-aspartate + ATP = L-aspartyl-tRNA(Asp) + AMP + diphosphate. Functionally, catalyzes the attachment of L-aspartate to tRNA(Asp) in a two-step reaction: L-aspartate is first activated by ATP to form Asp-AMP and then transferred to the acceptor end of tRNA(Asp). In Clostridium tetani (strain Massachusetts / E88), this protein is Aspartate--tRNA ligase.